The primary structure comprises 316 residues: 4-hydroxy-3-methylbut-2-enyl diphosphate reductase (316 aa).

Cys18 is a binding site for [4Fe-4S] cluster. 2 residues coordinate (2E)-4-hydroxy-3-methylbut-2-enyl diphosphate: His47 and His80. Positions 47 and 80 each coordinate dimethylallyl diphosphate. Residues His47 and His80 each coordinate isopentenyl diphosphate. Cys102 is a binding site for [4Fe-4S] cluster. His130 serves as a coordination point for (2E)-4-hydroxy-3-methylbut-2-enyl diphosphate. A dimethylallyl diphosphate-binding site is contributed by His130. Isopentenyl diphosphate is bound at residue His130. Glu132 functions as the Proton donor in the catalytic mechanism. Residue Thr171 participates in (2E)-4-hydroxy-3-methylbut-2-enyl diphosphate binding. A [4Fe-4S] cluster-binding site is contributed by Cys201. Residues Ser229, Ser230, Asn231, and Ser274 each coordinate (2E)-4-hydroxy-3-methylbut-2-enyl diphosphate. Ser229, Ser230, Asn231, and Ser274 together coordinate dimethylallyl diphosphate. Isopentenyl diphosphate contacts are provided by Ser229, Ser230, Asn231, and Ser274.

This sequence belongs to the IspH family. The cofactor is [4Fe-4S] cluster.

The enzyme catalyses isopentenyl diphosphate + 2 oxidized [2Fe-2S]-[ferredoxin] + H2O = (2E)-4-hydroxy-3-methylbut-2-enyl diphosphate + 2 reduced [2Fe-2S]-[ferredoxin] + 2 H(+). The catalysed reaction is dimethylallyl diphosphate + 2 oxidized [2Fe-2S]-[ferredoxin] + H2O = (2E)-4-hydroxy-3-methylbut-2-enyl diphosphate + 2 reduced [2Fe-2S]-[ferredoxin] + 2 H(+). The protein operates within isoprenoid biosynthesis; dimethylallyl diphosphate biosynthesis; dimethylallyl diphosphate from (2E)-4-hydroxy-3-methylbutenyl diphosphate: step 1/1. It functions in the pathway isoprenoid biosynthesis; isopentenyl diphosphate biosynthesis via DXP pathway; isopentenyl diphosphate from 1-deoxy-D-xylulose 5-phosphate: step 6/6. Its function is as follows. Catalyzes the conversion of 1-hydroxy-2-methyl-2-(E)-butenyl 4-diphosphate (HMBPP) into a mixture of isopentenyl diphosphate (IPP) and dimethylallyl diphosphate (DMAPP). Acts in the terminal step of the DOXP/MEP pathway for isoprenoid precursor biosynthesis. This Ruegeria sp. (strain TM1040) (Silicibacter sp.) protein is 4-hydroxy-3-methylbut-2-enyl diphosphate reductase.